The chain runs to 236 residues: 2,3,4,5-tetrahydropyridine-2,6-dicarboxylate N-acetyltransferase (236 aa).

This sequence belongs to the transferase hexapeptide repeat family. DapH subfamily.

It catalyses the reaction (S)-2,3,4,5-tetrahydrodipicolinate + acetyl-CoA + H2O = L-2-acetamido-6-oxoheptanedioate + CoA. It functions in the pathway amino-acid biosynthesis; L-lysine biosynthesis via DAP pathway; LL-2,6-diaminopimelate from (S)-tetrahydrodipicolinate (acetylase route): step 1/3. Catalyzes the transfer of an acetyl group from acetyl-CoA to tetrahydrodipicolinate. The protein is 2,3,4,5-tetrahydropyridine-2,6-dicarboxylate N-acetyltransferase of Listeria ivanovii.